A 407-amino-acid chain; its full sequence is Probable NADPH dehydrogenase (407 aa).

FMN is bound by residues Thr-49 and Gln-124. A substrate-binding site is contributed by 201–204; it reads HGAH. Catalysis depends on Tyr-206, which acts as the Proton donor. Positions 254 and 357 each coordinate FMN.

This sequence belongs to the NADH:flavin oxidoreductase/NADH oxidase family. Requires FMN as cofactor.

The enzyme catalyses A + NADPH + H(+) = AH2 + NADP(+). Oxidoreductase that binds mammalian estrogens with high affinity. The protein is Probable NADPH dehydrogenase of Candida albicans (Yeast).